The primary structure comprises 152 residues: MIEEEIEVDVDIKTRADKFHKFIRRSQHVPKATHYIKGCDLLEGEWGKVGSILLWKLVFDGEPRVSKDMIEVIDEEKNVIQLRVLEGPLKKEYKSFLKTMKVMSPKHGGPGSVVKWNMKYERIDQNVDHPNRLLQFFVEVTKEIDQYLLSKD.

It belongs to the MLP family.

In Arabidopsis thaliana (Mouse-ear cress), this protein is MLP-like protein 165 (MLP165).